Consider the following 345-residue polypeptide: Protein RecA (345 aa).

65–72 (GPESSGKT) contributes to the ATP binding site.

The protein belongs to the RecA family.

It is found in the cytoplasm. Can catalyze the hydrolysis of ATP in the presence of single-stranded DNA, the ATP-dependent uptake of single-stranded DNA by duplex DNA, and the ATP-dependent hybridization of homologous single-stranded DNAs. It interacts with LexA causing its activation and leading to its autocatalytic cleavage. This is Protein RecA from Campylobacter fetus subsp. fetus (strain 82-40).